Here is a 428-residue protein sequence, read N- to C-terminus: Chaperone SurA (428 aa).

A signal peptide spans 1–13; the sequence is MLGALLLSGAVHA. PpiC domains lie at 164–265 and 276–375; these read SEEF…KLLE and RDEV…EVLG. The interval 211 to 230 is disordered; it reads TSSSSENALEGGDMGWRKAA.

Its subcellular location is the periplasm. The enzyme catalyses [protein]-peptidylproline (omega=180) = [protein]-peptidylproline (omega=0). Chaperone involved in the correct folding and assembly of outer membrane proteins. Recognizes specific patterns of aromatic residues and the orientation of their side chains, which are found more frequently in integral outer membrane proteins. May act in both early periplasmic and late outer membrane-associated steps of protein maturation. This chain is Chaperone SurA, found in Pseudomonas syringae pv. syringae (strain B728a).